The sequence spans 379 residues: Chaperone protein DnaJ (379 aa).

In terms of domain architecture, J spans 5-69 (DYYEVLGISK…NKRATIDQFG (65 aa)). Residues 136-218 (GTTKEISIRK…CHGKGTENKT (83 aa)) form a CR-type zinc finger. Cys149, Cys152, Cys166, Cys169, Cys192, Cys195, Cys206, and Cys209 together coordinate Zn(2+). CXXCXGXG motif repeat units follow at residues 149–156 (CETCHGDG), 166–173 (CSYCNGAG), 192–199 (CPKCNGSG), and 206–213 (CPTCHGKG).

Belongs to the DnaJ family. As to quaternary structure, homodimer. Zn(2+) is required as a cofactor.

Its subcellular location is the cytoplasm. Its function is as follows. Participates actively in the response to hyperosmotic and heat shock by preventing the aggregation of stress-denatured proteins and by disaggregating proteins, also in an autonomous, DnaK-independent fashion. Unfolded proteins bind initially to DnaJ; upon interaction with the DnaJ-bound protein, DnaK hydrolyzes its bound ATP, resulting in the formation of a stable complex. GrpE releases ADP from DnaK; ATP binding to DnaK triggers the release of the substrate protein, thus completing the reaction cycle. Several rounds of ATP-dependent interactions between DnaJ, DnaK and GrpE are required for fully efficient folding. Also involved, together with DnaK and GrpE, in the DNA replication of plasmids through activation of initiation proteins. The protein is Chaperone protein DnaJ of Staphylococcus aureus.